The sequence spans 194 residues: ATP-dependent Clp protease proteolytic subunit (194 aa).

Ser97 (nucleophile) is an active-site residue. His122 is a catalytic residue.

This sequence belongs to the peptidase S14 family. Fourteen ClpP subunits assemble into 2 heptameric rings which stack back to back to give a disk-like structure with a central cavity, resembling the structure of eukaryotic proteasomes.

It is found in the cytoplasm. The catalysed reaction is Hydrolysis of proteins to small peptides in the presence of ATP and magnesium. alpha-casein is the usual test substrate. In the absence of ATP, only oligopeptides shorter than five residues are hydrolyzed (such as succinyl-Leu-Tyr-|-NHMec, and Leu-Tyr-Leu-|-Tyr-Trp, in which cleavage of the -Tyr-|-Leu- and -Tyr-|-Trp bonds also occurs).. Its function is as follows. Cleaves peptides in various proteins in a process that requires ATP hydrolysis. Has a chymotrypsin-like activity. Plays a major role in the degradation of misfolded proteins. The protein is ATP-dependent Clp protease proteolytic subunit of Campylobacter jejuni subsp. jejuni serotype O:6 (strain 81116 / NCTC 11828).